The chain runs to 1178 residues: Pyruvate carboxylase, mitochondrial (1178 aa).

The N-terminal 20 residues, 1–20, are a transit peptide targeting the mitochondrion; it reads MLKFQTVRGGLRLLGVRRSS. A Phosphoserine modification is found at Ser21. N6-acetyllysine occurs at positions 35 and 39. The region spanning 36 to 486 is the Biotin carboxylation domain; it reads PIKKVMVANR…DTQFIDENPE (451 aa). Lys79 is modified (N6-acetyllysine; alternate). At Lys79 the chain carries N6-succinyllysine; alternate. N6-acetyllysine is present on residues Lys148 and Lys152. 2 residues coordinate ATP: Lys152 and Glu236. One can recognise an ATP-grasp domain in the interval 156 to 353; it reads RAIAIAAGVP…LVHAQIHVSE (198 aa). At Lys241 the chain carries N6-acetyllysine. His271 lines the ATP pocket. N6-acetyllysine occurs at positions 297, 316, and 319. Residue Arg328 is part of the active site. N6-acetyllysine is present on Lys434. Lys442 carries the N6-succinyllysine modification. Positions 563 to 832 constitute a Pyruvate carboxyltransferase domain; it reads LLLMDTTFRD…DTEVPLERVF (270 aa). 571–575 contacts substrate; sequence RDAHQ. Asp572 provides a ligand contact to Mn(2+). Position 589 is an N6-acetyllysine (Lys589). Arg644 serves as a coordination point for substrate. Lys661 and Lys717 each carry N6-acetyllysine. Lys741 is a binding site for Mn(2+). N6-carboxylysine is present on Lys741. An N6-acetyllysine modification is found at Lys748. 2 residues coordinate Mn(2+): His771 and His773. The residue at position 892 (Lys892) is an N6-acetyllysine. Thr908 is a binding site for substrate. At Lys969 the chain carries N6-acetyllysine. N6-acetyllysine; alternate is present on Lys988. Lys988 is modified (N6-succinyllysine; alternate). Residue Lys992 is modified to N6-acetyllysine. At Thr1003 the chain carries Phosphothreonine. N6-acetyllysine is present on residues Lys1061, Lys1090, and Lys1124. The 70-residue stretch at 1109 to 1178 folds into the Biotinyl-binding domain; the sequence is KGQIGAPMPG…EGDDLILEIE (70 aa). Lys1144 carries the N6-biotinyllysine modification.

Homotetramer. Interacts (via the biotin carboxylation domain) with SIRT4. Requires biotin as cofactor. It depends on Mn(2+) as a cofactor. In terms of processing, acetylation of Lys-316 is observed in liver mitochondria from fasted mice but not from fed mice. Acetylation of Lys-748 might play a role in catalytic activity regulation. As to expression, liver, kidney, adipose tissue, liver and brain.

It is found in the mitochondrion matrix. It carries out the reaction hydrogencarbonate + pyruvate + ATP = oxaloacetate + ADP + phosphate + H(+). It functions in the pathway carbohydrate biosynthesis; gluconeogenesis. Pyruvate carboxylase catalyzes a 2-step reaction, involving the ATP-dependent carboxylation of the covalently attached biotin in the first step and the transfer of the carboxyl group to pyruvate in the second. Catalyzes in a tissue specific manner, the initial reactions of glucose (liver, kidney) and lipid (adipose tissue, liver, brain) synthesis from pyruvate. This is Pyruvate carboxylase, mitochondrial (Pc) from Mus musculus (Mouse).